Here is a 1383-residue protein sequence, read N- to C-terminus: Insulin receptor (1383 aa).

A signal peptide spans Met1–Gly26. Extracellular segments follow at residues His27–Ser759 and Ser764–Lys957. Cys34 and Cys52 are joined by a disulfide. Asn42, Asn51, Asn104, and Asn137 each carry an N-linked (GlcNAc...) asparagine glycan. Cystine bridges form between Cys152–Cys181, Cys185–Cys208, Cys195–Cys214, Cys218–Cys227, Cys222–Cys233, Cys234–Cys242, Cys238–Cys251, Cys254–Cys263, and Cys267–Cys279. Asn241 carries an N-linked (GlcNAc...) asparagine glycan. The N-linked (GlcNAc...) asparagine glycan is linked to Asn281. 5 cysteine pairs are disulfide-bonded: Cys285–Cys310, Cys292–Cys300, Cys314–Cys327, Cys330–Cys334, and Cys338–Cys359. Asn321 carries an N-linked (GlcNAc...) asparagine glycan. N-linked (GlcNAc...) asparagine glycosylation is present at Asn363. Residue Ser399 is modified to Phosphoserine. A Phosphotyrosine modification is found at Tyr400. At Ser406 the chain carries Phosphoserine. Residues Asn423 and Asn444 are each glycosylated (N-linked (GlcNAc...) asparagine). A disulfide bridge links Cys461 with Cys494. Residues Asn540, Asn634, Asn652, and Asn699 are each glycosylated (N-linked (GlcNAc...) asparagine). A Fibronectin type-III 1 domain is found at Val625 to Ser727. Residues Cys675 and Cys900 are joined by a disulfide bond. The disordered stretch occupies residues Ser687–Glu709. The interval Glu734–Phe742 is insulin-binding. Residues Thr747 to Asn783 form a disordered region. Fibronectin type-III domains are found at residues Glu754–Glu848 and Ile854–Tyr948. N-linked (GlcNAc...) asparagine glycosylation is found at Asn770, Asn783, Asn921, and Asn934. Polar residues predominate over residues Val771–Asn783. A helical membrane pass occupies residues Ile958 to Leu978. The Cytoplasmic portion of the chain corresponds to Phe979–Ser1383. Residues Asn997–Tyr1000 form an important for interaction with IRS1, SHC1 and STAT5B region. Tyr1000 bears the Phosphotyrosine; by autocatalysis mark. One can recognise a Protein kinase domain in the interval Ile1024–Phe1299. 2 residues coordinate ATP: Ser1034 and Lys1058. Lys1080 participates in a covalent cross-link: Glycyl lysine isopeptide (Lys-Gly) (interchain with G-Cter in ubiquitin). Cys1084 carries the S-nitrosocysteine modification. An ATP-binding site is contributed by Glu1105 to Asp1111. Catalysis depends on Asp1160, which acts as the Proton donor/acceptor. ATP is bound by residues Arg1164 to Asn1165 and Asp1178. Residues Tyr1186, Tyr1190, Tyr1191, Tyr1356, and Tyr1362 each carry the phosphotyrosine; by autocatalysis modification. The segment at Pro1361–Ser1383 is disordered. Residues Tyr1362–Met1365 form a PIK3R1 binding region.

The protein belongs to the protein kinase superfamily. Tyr protein kinase family. Insulin receptor subfamily. In terms of assembly, tetramer of 2 alpha and 2 beta chains linked by disulfide bonds. The alpha chains carry the insulin-binding regions, while the beta chains carry the kinase domain. Forms a hybrid receptor with IGF1R, the hybrid is a tetramer consisting of 1 alpha chain and 1 beta chain of INSR and 1 alpha chain and 1 beta chain of IGF1R. Interacts with SORBS1 but dissociates from it following insulin stimulation. Binds SH2B2. Activated form of INSR interacts (via Tyr-1000) with the PTB/PID domains of IRS1 and SHC1. The sequences surrounding the phosphorylated NPXY motif contribute differentially to either IRS1 or SHC1 recognition. Interacts (via tyrosines in the C-terminus) with IRS2 (via PTB domain and 591-786 AA); the 591-786 would be the primary anchor of IRS2 to INSR while the PTB domain would have a stabilizing action on the interaction with INSR. Interacts with the SH2 domains of the 85 kDa regulatory subunit of PI3K (PIK3R1) in vitro, when autophosphorylated on tyrosine residues. Interacts with SOCS7. Interacts (via the phosphorylated Tyr-1000), with SOCS3. Interacts (via the phosphorylated Tyr-1186, Tyr-1190, Tyr-1191) with SOCS1. Interacts with ARRB2. Interacts with GRB10; this interaction blocks the association between IRS1/IRS2 and INSR, significantly reduces insulin-stimulated tyrosine phosphorylation of IRS1 and IRS2 and thus decreases insulin signaling. Interacts with PDPK1. Interacts (via Tyr-1191) with GRB14 (via BPS domain); this interaction protects the tyrosines in the activation loop from dephosphorylation, but promotes dephosphorylation of Tyr-1000, this results in decreased interaction with, and phosphorylation of, IRS1. Interacts (via subunit alpha) with ENPP1 (via 485-599 AA); this interaction blocks autophosphorylation. Interacts with PTPRE; this interaction is dependent of Tyr-1186, Tyr-1190 and Tyr-1191 of the INSR. Interacts with STAT5B (via SH2 domain). Interacts with PTPRF. Interacts with GRB7. Interacts with CAV2 (tyrosine-phosphorylated form); the interaction is increased with 'Tyr-27'phosphorylation of CAV2. Interacts with ATIC; ATIC together with PRKAA2/AMPK2 and HACD3/PTPLAD1 is proposed to be part of a signaling netwok regulating INSR autophosphorylation and endocytosis. Interacts with the insulin receptor SORL1; this interaction strongly increases its surface exposure, hence strengthens insulin signal reception. Interacts (tyrosine phosphorylated) with CCDC88A/GIV (via SH2-like region); binding requires autophosphorylation of the Insr C-terminal region. Interacts with GNAI3; the interaction is probably mediated by CCDC88A/GIV. Interacts with LMBRD1. Interacts (in response to insulin stimulation) with NCK1; this interaction may recruit PTPN1 to mediate INSR dephosphorylation. Interacts with CD248; this interaction diminishes INSR autophosphorylation. After being transported from the endoplasmic reticulum to the Golgi apparatus, the single glycosylated precursor is further glycosylated and then cleaved, followed by its transport to the plasma membrane. In terms of processing, autophosphorylated on tyrosine residues in response to insulin. Phosphorylation of Tyr-1000 is required for binding to IRS1, SHC1 and STAT5B. May also be phosphorylated at Tyr-1186 and Tyr-1191 by mTORC2. Dephosphorylated by PTPRE at Tyr-1000, Tyr-1186, Tyr-1190 and Tyr-1191. Dephosphorylated by PTPRF and PTPN1. Dephosphorylated by PTPN2; down-regulates insulin-induced signaling. Post-translationally, S-nitrosylation at Cys-1084 by BLVRB inhibits the receptor tyrosine kinase, thereby inhibiting insulin signaling. Ubiquitinated by MARCHF1; leading to degradation thereby reducing surface INSR expression.

The protein localises to the cell membrane. It localises to the late endosome. The protein resides in the lysosome. The enzyme catalyses L-tyrosyl-[protein] + ATP = O-phospho-L-tyrosyl-[protein] + ADP + H(+). With respect to regulation, activated in response to insulin. Autophosphorylation activates the kinase activity. PTPN1, PTPRE and PTPRF dephosphorylate important tyrosine residues, thereby reducing INSR activity. Inhibited by ENPP1. GRB10 and GRB14 inhibit the catalytic activity of the INSR, they block access of substrates to the activated receptor. SOCS1 and SOCS3 act as negative regulators of INSR activity, they bind to the activated INRS and interfere with the phosphorylation of INSR substrates. Its function is as follows. Receptor tyrosine kinase which mediates the pleiotropic actions of insulin. Binding of insulin leads to phosphorylation of several intracellular substrates, including, insulin receptor substrates (IRS1, 2, 3, 4), SHC, GAB1, CBL and other signaling intermediates. Each of these phosphorylated proteins serve as docking proteins for other signaling proteins that contain Src-homology-2 domains (SH2 domain) that specifically recognize different phosphotyrosine residues, including the p85 regulatory subunit of PI3K and SHP2. Phosphorylation of IRSs proteins lead to the activation of two main signaling pathways: the PI3K-AKT/PKB pathway, which is responsible for most of the metabolic actions of insulin, and the Ras-MAPK pathway, which regulates expression of some genes and cooperates with the PI3K pathway to control cell growth and differentiation. Binding of the SH2 domains of PI3K to phosphotyrosines on IRS1 leads to the activation of PI3K and the generation of phosphatidylinositol-(3, 4, 5)-triphosphate (PIP3), a lipid second messenger, which activates several PIP3-dependent serine/threonine kinases, such as PDPK1 and subsequently AKT/PKB. The net effect of this pathway is to produce a translocation of the glucose transporter SLC2A4/GLUT4 from cytoplasmic vesicles to the cell membrane to facilitate glucose transport. Moreover, upon insulin stimulation, activated AKT/PKB is responsible for: anti-apoptotic effect of insulin by inducing phosphorylation of BAD; regulates the expression of gluconeogenic and lipogenic enzymes by controlling the activity of the winged helix or forkhead (FOX) class of transcription factors. Another pathway regulated by PI3K-AKT/PKB activation is mTORC1 signaling pathway which regulates cell growth and metabolism and integrates signals from insulin. AKT mediates insulin-stimulated protein synthesis by phosphorylating TSC2 thereby activating mTORC1 pathway. The Ras/RAF/MAP2K/MAPK pathway is mainly involved in mediating cell growth, survival and cellular differentiation of insulin. Phosphorylated IRS1 recruits GRB2/SOS complex, which triggers the activation of the Ras/RAF/MAP2K/MAPK pathway. In addition to binding insulin, the insulin receptor can bind insulin-like growth factors (IGFI and IGFII). When present in a hybrid receptor with IGF1R, binds IGF1. In adipocytes, inhibits lipolysis. The protein is Insulin receptor (Insr) of Rattus norvegicus (Rat).